Here is a 443-residue protein sequence, read N- to C-terminus: D-serine dehydratase (443 aa).

An N6-(pyridoxal phosphate)lysine modification is found at Lys118.

The protein belongs to the serine/threonine dehydratase family. DsdA subfamily. Monomer. It depends on pyridoxal 5'-phosphate as a cofactor.

It carries out the reaction D-serine = pyruvate + NH4(+). In Yersinia enterocolitica serotype O:8 / biotype 1B (strain NCTC 13174 / 8081), this protein is D-serine dehydratase.